The primary structure comprises 350 residues: DNA-directed RNA polymerase subunit alpha (350 aa).

Positions 1 to 226 (MLISQRPTLS…ELFGLARELN (226 aa)) are alpha N-terminal domain (alpha-NTD). The alpha C-terminal domain (alpha-CTD) stretch occupies residues 241–350 (ADQAAHFALP…NQDYAETEQL (110 aa)). Residues 328–350 (GTWNSDAGYDLEDNQDYAETEQL) form a disordered region. The span at 336 to 350 (YDLEDNQDYAETEQL) shows a compositional bias: acidic residues.

It belongs to the RNA polymerase alpha chain family. In terms of assembly, homodimer. The RNAP catalytic core consists of 2 alpha, 1 beta, 1 beta' and 1 omega subunit. When a sigma factor is associated with the core the holoenzyme is formed, which can initiate transcription.

The enzyme catalyses RNA(n) + a ribonucleoside 5'-triphosphate = RNA(n+1) + diphosphate. Its function is as follows. DNA-dependent RNA polymerase catalyzes the transcription of DNA into RNA using the four ribonucleoside triphosphates as substrates. The chain is DNA-directed RNA polymerase subunit alpha from Mycolicibacterium vanbaalenii (strain DSM 7251 / JCM 13017 / BCRC 16820 / KCTC 9966 / NRRL B-24157 / PYR-1) (Mycobacterium vanbaalenii).